A 1104-amino-acid polypeptide reads, in one-letter code: Transient receptor potential cation channel subfamily M member 8 (1104 aa).

A disordered region spans residues 1–22 (MSFEGARLSMRSRRNGTMGSTR). At 1 to 733 (MSFEGARLSM…LWYYVAFFTS (733 aa)) the chain is on the cytoplasmic side. The chain crosses the membrane as a helical span at residues 734–758 (PFVVFSWNVVFYIAFLLLFAYVLLM). At 759-765 (DFHSVPH) the chain is on the extracellular side. Residues 766-789 (TPELILYALVFVLFCDEVRQWYMN) traverse the membrane as a helical segment. Glu782 and Gln785 together coordinate Ca(2+). The Cytoplasmic segment spans residues 790–796 (GVNYFTD). A helical membrane pass occupies residues 797–817 (LWNVMDTLGLFYFIAGIVFRL). Positions 799 and 802 each coordinate Ca(2+). Residues 818-822 (HSSNK) are Extracellular-facing. A helical membrane pass occupies residues 823–848 (SSLYSGRVIFCLDYIIFTLRLIHIFT). The Cytoplasmic portion of the chain corresponds to 849 to 853 (VSRNL). The helical transmembrane segment at 854–890 (GPKIIMLQRMLIDVFFFLFLFAVWMVAFGVARQGILR) threads the bilayer. Topologically, residues 891–895 (QNEQR) are extracellular. The segment at residues 896–912 (WRWIFRSVIYEPYLAMF) is an intramembrane region (pore-forming). Topologically, residues 913–953 (GQVPSDVDSTTYDFSHCTFSGNESKPLCVELDEHNLPRFPE) are extracellular. A glycan (N-linked (GlcNAc...) (complex) asparagine) is linked at Asn934. A helical membrane pass occupies residues 954–984 (WITIPLVCIYMLSTNILLVNLLVAMFGYTVG). Over 985–1104 (IVQENNDQVW…LLKEIANNIK (120 aa)) the chain is Cytoplasmic. Positions 1069–1104 (TKANDNSEEMRHRFRQLDSKLNDLKSLLKEIANNIK) form a coiled coil.

Belongs to the transient receptor (TC 1.A.4) family. LTrpC subfamily. TRPM8 sub-subfamily. In terms of assembly, homotetramer. Interacts (via N-terminus and C-terminus domains) with TCAF1; the interaction stimulates TRPM8 channel activity. Interacts (via N-terminus and C-terminus domains) with TCAF2; the interaction inhibits TRPM8 channel activity. N-glycosylation is not essential for but facilitates cell surface expression, multimerization, association with lipid rafts and ion channel activity. In terms of tissue distribution, expressed in dorsal root and trigeminal ganglia. Specifically expressed in a subset of pain- and temperature-sensing neurons. Not expressed in heavily myelinated neurons. Not expressed in neurons expressing TRPA1 or TRPV1.

It is found in the cell membrane. The protein resides in the membrane raft. The enzyme catalyses Ca(2+)(in) = Ca(2+)(out). It catalyses the reaction Na(+)(in) = Na(+)(out). The catalysed reaction is K(+)(in) = K(+)(out). Its activity is regulated as follows. Activated by cold temperatures and by both natural and synthetic cooling compounds such as menthol and icilin. Activation of the channel requires the presence of PI(4,5)P2; PI(4,5)P2 is necessary to gate the channel. Activated by intracellular Ca(2+). Functionally, non-selective ion channel permeable to monovalent and divalent cations, including Na(+), K(+), and Ca(2+), with higher permeability for Ca(2+). Activated by multiple factors, such as temperature, voltage, pressure, and changes in osmolality. Activated by cool temperatures (&lt;23-28 degrees Celsius) and by chemical ligands evoking a sensation of coolness, such as menthol and icilin, therefore plays a central role in the detection of environmental cold temperatures. TRPM8 is a voltage-dependent channel; its activation by cold or chemical ligands shifts its voltage thresholds towards physiological membrane potentials, leading to the opening of the channel. In addition to its critical role in temperature sensing, regulates basal tear secretion by sensing evaporation-induced cooling and changes in osmolality. This Mus musculus (Mouse) protein is Transient receptor potential cation channel subfamily M member 8 (Trpm8).